The chain runs to 270 residues: Orotidine 5'-phosphate decarboxylase (270 aa).

Substrate-binding positions include aspartate 41, 63–65, 95–104, tyrosine 221, and arginine 239; these read KTH and DRKFADIGNT. Catalysis depends on lysine 97, which acts as the Proton donor.

It belongs to the OMP decarboxylase family.

It catalyses the reaction orotidine 5'-phosphate + H(+) = UMP + CO2. It functions in the pathway pyrimidine metabolism; UMP biosynthesis via de novo pathway; UMP from orotate: step 2/2. This is Orotidine 5'-phosphate decarboxylase (URA3) from Candida boidinii (Yeast).